The following is a 454-amino-acid chain: Aspartate aminotransferase P2, mitochondrial (454 aa).

The transit peptide at 1–49 (SSLLSIPSLSLQYNDKLKVGGNSLRFSKEQSNTFSNAKSSCRISMVAAV) directs the protein to the mitochondrion. 3 residues coordinate L-aspartate: glycine 86, tryptophan 182, and asparagine 235. Position 299 is an N6-(pyridoxal phosphate)lysine (lysine 299). Position 428 (arginine 428) interacts with L-aspartate.

This sequence belongs to the class-I pyridoxal-phosphate-dependent aminotransferase family. In terms of assembly, homodimer. The cofactor is pyridoxal 5'-phosphate.

The protein localises to the mitochondrion matrix. The catalysed reaction is L-aspartate + 2-oxoglutarate = oxaloacetate + L-glutamate. Its function is as follows. Important for the metabolism of amino acids and Krebs-cycle related organic acids. In plants, it is involved in nitrogen metabolism and in aspects of carbon and energy metabolism. This Lupinus angustifolius (Narrow-leaved blue lupine) protein is Aspartate aminotransferase P2, mitochondrial.